A 927-amino-acid chain; its full sequence is Band 3 anion transport protein (927 aa).

Residue Met-1 is modified to N-acetylmethionine. Over 1–420 (MGDMQDHEKV…LSDITDALSP (420 aa)) the chain is Cytoplasmic. A Phosphoserine modification is found at Ser-18. Phosphotyrosine occurs at positions 31 and 56. A globular region spans residues 69–303 (SQVYVELQEL…LGRAAATLMT (235 aa)). The tract at residues 190–199 (AVLTRSGAPS) is interaction with ANK1. A phosphoserine mark is found at Ser-199 and Ser-222. A dimerization arm region spans residues 317-370 (RGELLSSLDSFLDCSLVLPPTEAPSEKALLNLVPVQKELLRKRYLPRPAKPDPN). The interval 367 to 390 (PDPNLYEALDGGKEGPGDEDDPLR) is disordered. Tyr-372 carries the phosphotyrosine modification. A helical membrane pass occupies residues 421 to 444 (QVLAAVIFIYFAALSPAVTFGGLL). At 445–452 (GEKTRNLM) the chain is on the extracellular side. Residues 453-473 (GVSELLISTAVQGILFALLGA) traverse the membrane as a helical segment. The Cytoplasmic segment spans residues 474–476 (QPL). A discontinuously helical transmembrane segment spans residues 477–493 (LVLGFSGPLLVFEEAFY). The Extracellular segment spans residues 494-502 (SFCESNNLE). A helical membrane pass occupies residues 503 to 523 (YIVGRAWIGFWLILLVVLVVA). Residues 524–535 (FEGSFLVQYISR) lie on the Cytoplasmic side of the membrane. Residues 536–558 (YTQEIFSFLISLIFIYETFSKLI) form a helical membrane-spanning segment. Topologically, residues 559-586 (KIFQDYPLQESYAPVVMKPKPQGPVPNT) are extracellular. A helical transmembrane segment spans residues 587 to 607 (ALLSLVLMVGTFLLAMMLRKF). Residues 608 to 618 (KNSTYFPGKLR) lie on the Cytoplasmic side of the membrane. Residues 619 to 639 (RVIGDFGVPISILIMVLVDTF) form a helical membrane-spanning segment. Topologically, residues 640–679 (IKNTYTQKLSVPDGLKVSNSSARGWVIHPLGLYNHFPKWM) are extracellular. Asn-658 is a glycosylation site (N-linked (GlcNAc...) asparagine). A helical membrane pass occupies residues 680–700 (MFASVLPALLVFILIFLESQI). Over 701–716 (TTLIVSKPERKMIKGS) the chain is Cytoplasmic. Residues 717 to 735 (GFHLDLLLVVGMGGVAALF) traverse the membrane as a helical segment. A discontinuously helical transmembrane segment spans residues 736–753 (GMPWLSATTVRSVTHANA). The Cytoplasmic segment spans residues 754 to 776 (LTVMGKASGPGAAAQIQEVKEQR). The next 2 helical transmembrane spans lie at 777–797 (ISGL…PILS) and 798–816 (RIPL…ITSL). Over 817 to 854 (SGIQLFDRILLLFKPPKYHPDVPFVKRVKTWRMHLFTG) the chain is Cytoplasmic. Residues 855–885 (IQIICLAVLWVVKSTPASLALPFVLILTVPL) constitute an intramembrane region (discontinuously helical). The S-palmitoyl cysteine moiety is linked to residue Cys-859. Residues 886–927 (RRLLLPLIFRELELQCLDGDDAKVTFDEAEGLDEYDEVPMPV) lie on the Cytoplasmic side of the membrane. Tyr-920 carries the phosphotyrosine modification.

Belongs to the anion exchanger (TC 2.A.31) family. In terms of assembly, a dimer in solution, but in its membrane environment, it exists primarily as a mixture of dimers and tetramers and spans the membrane asymmetrically. Component of the ankyrin-1 complex in the erythrocyte, composed of ANK1, RHCE, RHAG, SLC4A1, EPB42, GYPA, GYPB and AQP1. Interacts with STOM; this interaction positively regulates SLC4A1 activity. Interacts with GYPA; a GYPA monomer is bound at each end of the SLC4A1 dimer forming a heterotetramer. Three SLC4A1 dimers (Band 3-I, Band 3-II and Band 3-III) participates in the ankyrin-1 complex. Interacts (via the cytoplasmic domain) with EPB42; this interaction is mediated by the SLC4A1 Band 3-I dimer. Interacts (via the cytoplasmic domain) directly with ANK1; this interaction is mediated by the SLC4A1 Band 3-II and Band 3-III dimers. As to quaternary structure, interacts with TMEM139. As to expression, kidney.

The protein resides in the cell membrane. It is found in the basolateral cell membrane. The enzyme catalyses hydrogencarbonate(in) + chloride(out) = hydrogencarbonate(out) + chloride(in). Functionally, functions both as a transporter that mediates electroneutral anion exchange across the cell membrane and as a structural protein. Component of the ankyrin-1 complex of the erythrocyte membrane; required for normal flexibility and stability of the erythrocyte membrane and for normal erythrocyte shape via the interactions of its cytoplasmic domain with cytoskeletal proteins, glycolytic enzymes, and hemoglobin. Functions as a transporter that mediates the 1:1 exchange of inorganic anions across the erythrocyte membrane. Mediates chloride-bicarbonate exchange in the kidney, and is required for normal acidification of the urine. The protein is Band 3 anion transport protein of Rattus norvegicus (Rat).